The chain runs to 211 residues: Stromal cell-derived factor 2 (211 aa).

The first 18 residues, 1–18 (MAVVSLLLFGGLWSAVGS), serve as a signal peptide directing secretion. MIR domains follow at residues 21 to 75 (LAVV…IRGK), 83 to 138 (GTPI…VLCN), and 139 to 193 (GPYW…AMEG).

The protein resides in the secreted. The sequence is that of Stromal cell-derived factor 2 (SDF2) from Bos taurus (Bovine).